Reading from the N-terminus, the 813-residue chain is Molybdenum cofactor sulfurase (813 aa).

An N6-(pyridoxal phosphate)lysine modification is found at lysine 228. Cysteine 391 is a catalytic residue. The segment at 625–670 (PSLRHAKAHMQKHQGPKRSAAIEKSSAHSFHDPPTPPDSDSENRKR) is disordered. Residues 628-640 (RHAKAHMQKHQGP) are compositionally biased toward basic residues. Residues 648–812 (KSSAHSFHDP…IKVGDKVSIG (165 aa)) enclose the MOSC domain.

It belongs to the class-V pyridoxal-phosphate-dependent aminotransferase family. MOCOS subfamily. Pyridoxal 5'-phosphate is required as a cofactor.

The catalysed reaction is Mo-molybdopterin + L-cysteine + AH2 = thio-Mo-molybdopterin + L-alanine + A + H2O. In terms of biological role, sulfurates the molybdenum cofactor. Sulfation of molybdenum is essential for xanthine dehydrogenase (XDH) and aldehyde oxidase (ADO) enzymes in which molybdenum cofactor is liganded by 1 oxygen and 1 sulfur atom in active form. The chain is Molybdenum cofactor sulfurase from Botryotinia fuckeliana (strain B05.10) (Noble rot fungus).